The primary structure comprises 371 residues: Cyanide hydratase (371 aa).

The CN hydrolase domain maps to 8–286 (YKAAAVQAEP…EGLMFVEIDL (279 aa)). The active-site Proton acceptor is the E48. K130 is an active-site residue. C165 serves as the catalytic Nucleophile. The tract at residues 326–356 (DGGIGTYNTQDRVGLNRPLDAPKVDGPSGVS) is disordered.

The protein belongs to the carbon-nitrogen hydrolase superfamily. Nitrilase family. As to quaternary structure, oligomer of dimers, forming left-handed helical fibers.

It catalyses the reaction formamide = hydrogen cyanide + H2O. Catalyzes the hydration of cyanide to formamide. Degradation of cyanide may be important for plant pathogenic fungi in infection of cyanogenic plants. Can also transform some nitriles like 2-cyanopyridine and fumaronitrile and has a minor activity with 4-cyanophenyl acetonitrile (4-CPA). This chain is Cyanide hydratase, found in Botryotinia fuckeliana (strain T4) (Noble rot fungus).